Here is a 607-residue protein sequence, read N- to C-terminus: Rap1 GTPase-GDP dissociation stimulator 1-B (607 aa).

ARM repeat units follow at residues 79 to 118 (ELMR…NICY), 170 to 211 (DSLQ…NLAE), 347 to 390 (DGNC…NLAI), 391 to 431 (PVVN…MLID), and 479 to 519 (SKDV…LIAA).

In terms of assembly, interacts with ralB. Probably interacts with the post-translationally isoprenylated (geranyl-geranylation) forms of ral proteins. Interacts with both GDP-bound and GTP-bound forms of ralA, but interaction is much stronger with ralA-GDP.

The protein resides in the cytoplasm. The protein localises to the cytosol. It localises to the endoplasmic reticulum. It is found in the mitochondrion. In terms of biological role, stimulates GDP/GTP exchange reaction of a group of small GTP-binding proteins (G proteins) including Rap1a/Rap1b, RhoA, RhoB and KRas, by stimulating the dissociation of GDP from and the subsequent binding of GTP to each small G protein. The protein is Rap1 GTPase-GDP dissociation stimulator 1-B (rap1gds1-b) of Xenopus laevis (African clawed frog).